Consider the following 417-residue polypeptide: Carboxypeptidase B (417 aa).

The first 16 residues, 1 to 16 (MLAFLILVTVTLASAH), serve as a signal peptide directing secretion. Residues 17–110 (HSGEHFEGDK…LEAQFDSRVR (94 aa)) constitute a propeptide, activation peptide. The 295-residue stretch at 118–412 (KYNNWETIEA…LAIKYVTSYV (295 aa)) folds into the Peptidase M14 domain. Residues cysteine 173 and cysteine 186 are joined by a disulfide bond. Histidine 176 and glutamate 179 together coordinate Zn(2+). Residues 176–179 (HARE), arginine 234, and 251–252 (NR) contribute to the substrate site. Disulfide bonds link cysteine 245/cysteine 268 and cysteine 259/cysteine 273. Histidine 304 provides a ligand contact to Zn(2+). Residues 305–306 (SY) and tyrosine 356 each bind substrate. Residue glutamate 378 is the Proton donor/acceptor of the active site.

This sequence belongs to the peptidase M14 family. It depends on Zn(2+) as a cofactor.

The protein localises to the secreted. The protein resides in the zymogen granule lumen. It catalyses the reaction Preferential release of a C-terminal lysine or arginine amino acid.. In Bos taurus (Bovine), this protein is Carboxypeptidase B (CPB1).